Reading from the N-terminus, the 366-residue chain is D-alanine--D-alanine ligase (366 aa).

In terms of domain architecture, ATP-grasp spans 149-358 (KIAFDHAGLP…FSELVDTLIQ (210 aa)). 185–240 (ETTLEYPCFVKPANLGSSVGIAKVRSRSELETALDNAASYDRRIIVEAGVEAKELE) provides a ligand contact to ATP. Mg(2+)-binding residues include D311, E325, and N327.

The protein belongs to the D-alanine--D-alanine ligase family. Requires Mg(2+) as cofactor. The cofactor is Mn(2+).

The protein localises to the cytoplasm. It carries out the reaction 2 D-alanine + ATP = D-alanyl-D-alanine + ADP + phosphate + H(+). It functions in the pathway cell wall biogenesis; peptidoglycan biosynthesis. Cell wall formation. The chain is D-alanine--D-alanine ligase from Trichodesmium erythraeum (strain IMS101).